We begin with the raw amino-acid sequence, 292 residues long: Diaminopimelate epimerase (292 aa).

Substrate-binding residues include Asn-13, Gln-46, and Asn-66. The Proton donor role is filled by Cys-75. Substrate is bound by residues 76-77 (GN), Asn-170, Asn-203, and 221-222 (ER). Cys-230 (proton acceptor) is an active-site residue. 231-232 (GT) is a substrate binding site.

Belongs to the diaminopimelate epimerase family. Homodimer.

The protein resides in the cytoplasm. The catalysed reaction is (2S,6S)-2,6-diaminopimelate = meso-2,6-diaminopimelate. It participates in amino-acid biosynthesis; L-lysine biosynthesis via DAP pathway; DL-2,6-diaminopimelate from LL-2,6-diaminopimelate: step 1/1. Functionally, catalyzes the stereoinversion of LL-2,6-diaminopimelate (L,L-DAP) to meso-diaminopimelate (meso-DAP), a precursor of L-lysine and an essential component of the bacterial peptidoglycan. This chain is Diaminopimelate epimerase, found in Acidovorax ebreus (strain TPSY) (Diaphorobacter sp. (strain TPSY)).